The primary structure comprises 78 residues: MPLPKIEDARKLNDEELVEEILAAKRQLFTLRFQKATNRLEKTHEFKHTRHRLAQLMTVERERQLQAQSAPSVTPEEE.

The protein belongs to the universal ribosomal protein uL29 family.

This Rippkaea orientalis (strain PCC 8801 / RF-1) (Cyanothece sp. (strain PCC 8801)) protein is Large ribosomal subunit protein uL29.